The chain runs to 505 residues: DEAD-box ATP-dependent RNA helicase 41 (505 aa).

The segment at 27 to 56 (GEPKCVICSRYGEYICDETNDDVCSLECKQ) adopts an HIT-type zinc-finger fold. A Q motif motif is present at residues 110–138 (LTFTSCGLPPKLLLNLETAGYDFPTPIQM). The Helicase ATP-binding domain maps to 141-318 (IPAALTGKSL…GSLAKEIILV (178 aa)). Residue 154 to 161 (ADTGSGKT) participates in ATP binding. The DEAD box signature appears at 267–270 (DEVD). A Helicase C-terminal domain is found at 342–492 (KKQKLFDILR…AIPKELINLT (151 aa)).

Belongs to the DEAD box helicase family. DDX59 subfamily.

It catalyses the reaction ATP + H2O = ADP + phosphate + H(+). In Arabidopsis thaliana (Mouse-ear cress), this protein is DEAD-box ATP-dependent RNA helicase 41 (RH41).